The following is a 295-amino-acid chain: 4-diphosphocytidyl-2-C-methyl-D-erythritol kinase (295 aa).

Lys-22 is a catalytic residue. 106-116 (PAGGGFGGGSS) lines the ATP pocket. Asp-148 is an active-site residue.

This sequence belongs to the GHMP kinase family. IspE subfamily.

It catalyses the reaction 4-CDP-2-C-methyl-D-erythritol + ATP = 4-CDP-2-C-methyl-D-erythritol 2-phosphate + ADP + H(+). The protein operates within isoprenoid biosynthesis; isopentenyl diphosphate biosynthesis via DXP pathway; isopentenyl diphosphate from 1-deoxy-D-xylulose 5-phosphate: step 3/6. In terms of biological role, catalyzes the phosphorylation of the position 2 hydroxy group of 4-diphosphocytidyl-2C-methyl-D-erythritol. In Xanthomonas oryzae pv. oryzae (strain MAFF 311018), this protein is 4-diphosphocytidyl-2-C-methyl-D-erythritol kinase.